The chain runs to 137 residues: Fluoride-specific ion channel FluC 1 (137 aa).

4 consecutive transmembrane segments (helical) span residues 3-23, 42-62, 69-89, and 107-127; these read PLVVLAVAIAGGLGAVARLVL, INVTGSFVLGLVTALALGHGL, ILGTGFIGGYTTFSTASYEAV, and MMFLALGAAGLGLWLGGLAVA. Na(+) is bound by residues Gly-76 and Thr-79.

It belongs to the fluoride channel Fluc/FEX (TC 1.A.43) family.

Its subcellular location is the cell membrane. It carries out the reaction fluoride(in) = fluoride(out). With respect to regulation, na(+) is not transported, but it plays an essential structural role and its presence is essential for fluoride channel function. Functionally, fluoride-specific ion channel. Important for reducing fluoride concentration in the cell, thus reducing its toxicity. The chain is Fluoride-specific ion channel FluC 1 from Leifsonia xyli subsp. xyli (strain CTCB07).